A 233-amino-acid polypeptide reads, in one-letter code: Antiholin-like protein LrgB (233 aa).

Helical transmembrane passes span 5–25 (LGIN…VIAT), 33–53 (GFFL…FLKL), 63–83 (IGGD…AIPL), 97–117 (IFGG…LVAI), 152–172 (LTSL…AKIV), and 212–232 (IAVV…APIL).

It belongs to the CidB/LrgB family. LrgB subfamily.

Its subcellular location is the cell membrane. In terms of biological role, inhibits the expression or activity of extracellular murein hydrolases by interacting, possibly with LrgA, with the holin-like proteins CidA and/or CidB. The LrgAB and CidAB proteins may affect the proton motive force of the membrane. May be involved in programmed cell death (PCD), possibly triggering PCD in response to antibiotics and environmental stresses. This chain is Antiholin-like protein LrgB, found in Staphylococcus epidermidis (strain ATCC 12228 / FDA PCI 1200).